Here is a 648-residue protein sequence, read N- to C-terminus: DNA ligase (648 aa).

Residues 30-34 (DEEYD) and 79-80 (SQ) each bind NAD(+). Lysine 110 functions as the N6-AMP-lysine intermediate in the catalytic mechanism. NAD(+) contacts are provided by arginine 131, glutamate 165, lysine 280, and lysine 304. Positions 398, 401, 414, and 419 each coordinate Zn(2+). The region spanning 573-648 (VSENPFKNKT…LTEEEMNSLF (76 aa)) is the BRCT domain.

The protein belongs to the NAD-dependent DNA ligase family. LigA subfamily. Requires Mg(2+) as cofactor. Mn(2+) serves as cofactor.

It catalyses the reaction NAD(+) + (deoxyribonucleotide)n-3'-hydroxyl + 5'-phospho-(deoxyribonucleotide)m = (deoxyribonucleotide)n+m + AMP + beta-nicotinamide D-nucleotide.. In terms of biological role, DNA ligase that catalyzes the formation of phosphodiester linkages between 5'-phosphoryl and 3'-hydroxyl groups in double-stranded DNA using NAD as a coenzyme and as the energy source for the reaction. It is essential for DNA replication and repair of damaged DNA. This chain is DNA ligase, found in Aliarcobacter butzleri (strain RM4018) (Arcobacter butzleri).